The following is a 1603-amino-acid chain: Transcription factor Gibbin (1603 aa).

Disordered regions lie at residues 19 to 108 (PDYL…SSSR), 150 to 236 (LRLS…STDY), 264 to 285 (LEPP…FLDP), and 394 to 467 (CRRR…RKGK). The span at 30-47 (GGPPTPRPLLPTRPPASP) shows a compositional bias: pro residues. Residue lysine 79 is modified to N6-acetyllysine. A compositionally biased stretch (polar residues) spans 166–178 (SFFSSPSLANSIR). Over residues 179-194 (SPEERATPHAKSERPS) the composition is skewed to basic and acidic residues. Positions 216-225 (PGATAAATGL) are enriched in low complexity. Position 268 is a phosphoserine (serine 268). Positions 273–285 (PQLLDPQPRFLDP) are enriched in low complexity. The a.T hook 1 DNA-binding region spans 396-408 (RRKAGRGRKADAG). A compositionally biased stretch (pro residues) spans 428–446 (EPPPPPPPPPPALPGPGPV). The segment at residues 544 to 556 (KRKRGRPPKNLLL) is a DNA-binding region (a.T hook 2). The segment at 581–607 (MPEVKKRRRRKQKLASPQPSYAADAND) is disordered. Phosphoserine is present on serine 596. A Glycyl lysine isopeptide (Lys-Gly) (interchain with G-Cter in SUMO2) cross-link involves residue lysine 609. Disordered stretches follow at residues 717–792 (LTEL…RNCG) and 806–827 (LESG…GQTE). Basic residues predominate over residues 737 to 746 (KPKRKRRSRK). Over residues 816-827 (YYSTGAPSGQTE) the composition is skewed to polar residues. A phosphoserine mark is found at serine 829 and serine 846. Arginine 891 carries the omega-N-methylarginine modification. Phosphoserine occurs at positions 896 and 1064. 2 disordered regions span residues 1159 to 1198 (VSET…QSSL) and 1253 to 1286 (ASAA…KKER). 2 stretches are compositionally biased toward low complexity: residues 1160-1171 (SETFSESSSDST) and 1187-1198 (SEASSSEGQSSL). Serine 1187 carries the post-translational modification Phosphoserine. 3 positions are modified to phosphoserine: serine 1322, serine 1324, and serine 1399. The residue at position 1401 (threonine 1401) is a Phosphothreonine. Serine 1403 carries the phosphoserine modification. Residue lysine 1409 forms a Glycyl lysine isopeptide (Lys-Gly) (interchain with G-Cter in SUMO2) linkage. Positions 1503 to 1533 (PHLASPPATPKADKEPLEMARPPGPPRGPAA) are disordered. Phosphoserine is present on residues serine 1507 and serine 1549.

It localises to the nucleus. The protein resides in the chromosome. In terms of biological role, transcription factor required for the proper patterning of the epidermis, which plays a key role in early epithelial morphogenesis. Directly binds promoter and enhancer regions and acts by maintaining local enhancer-promoter chromatin architecture. Interacts with many sequence-specific zinc-finger transcription factors and methyl-CpG-binding proteins to regulate the expression of mesoderm genes that wire surface ectoderm stratification. This chain is Transcription factor Gibbin, found in Homo sapiens (Human).